The chain runs to 287 residues: Pantothenate synthetase (287 aa).

30–37 provides a ligand contact to ATP; the sequence is MGALHSGH. His37 functions as the Proton donor in the catalytic mechanism. A (R)-pantoate-binding site is contributed by Gln61. Gln61 is a binding site for beta-alanine. ATP is bound at residue 152-155; it reads GQKD. Gln158 contributes to the (R)-pantoate binding site. ATP-binding positions include Ile181 and 189-192; that span reads ESSR.

It belongs to the pantothenate synthetase family. As to quaternary structure, homodimer.

The protein localises to the cytoplasm. It catalyses the reaction (R)-pantoate + beta-alanine + ATP = (R)-pantothenate + AMP + diphosphate + H(+). It participates in cofactor biosynthesis; (R)-pantothenate biosynthesis; (R)-pantothenate from (R)-pantoate and beta-alanine: step 1/1. Functionally, catalyzes the condensation of pantoate with beta-alanine in an ATP-dependent reaction via a pantoyl-adenylate intermediate. The sequence is that of Pantothenate synthetase from Corynebacterium efficiens (strain DSM 44549 / YS-314 / AJ 12310 / JCM 11189 / NBRC 100395).